Reading from the N-terminus, the 37-residue chain is Large ribosomal subunit protein bL36 (37 aa).

The protein belongs to the bacterial ribosomal protein bL36 family.

The sequence is that of Large ribosomal subunit protein bL36 from Mycoplasmopsis pulmonis (strain UAB CTIP) (Mycoplasma pulmonis).